A 451-amino-acid chain; its full sequence is Tubulin alpha-1/alpha-2 chain (451 aa).

Gln11 is a GTP binding site. Position 40 is an N6-acetyllysine (Lys40). GTP contacts are provided by Glu71, Gly144, Thr145, Thr179, Asn206, and Asn228. Glu71 contacts Mg(2+). Glu254 is an active-site residue.

It belongs to the tubulin family. As to quaternary structure, dimer of alpha and beta chains. A typical microtubule is a hollow water-filled tube with an outer diameter of 25 nm and an inner diameter of 15 nM. Alpha-beta heterodimers associate head-to-tail to form protofilaments running lengthwise along the microtubule wall with the beta-tubulin subunit facing the microtubule plus end conferring a structural polarity. Microtubules usually have 13 protofilaments but different protofilament numbers can be found in some organisms and specialized cells. Mg(2+) is required as a cofactor. In terms of processing, undergoes a tyrosination/detyrosination cycle, the cyclic removal and re-addition of a C-terminal tyrosine residue by the enzymes tubulin tyrosine carboxypeptidase (TTCP) and tubulin tyrosine ligase (TTL), respectively. Post-translationally, acetylation of alpha chains at Lys-40 stabilizes microtubules and affects affinity and processivity of microtubule motors. This modification has a role in multiple cellular functions, ranging from cell motility, cell cycle progression or cell differentiation to intracellular trafficking and signaling.

It is found in the cytoplasm. Its subcellular location is the cytoskeleton. The enzyme catalyses GTP + H2O = GDP + phosphate + H(+). In terms of biological role, tubulin is the major constituent of microtubules, a cylinder consisting of laterally associated linear protofilaments composed of alpha- and beta-tubulin heterodimers. Microtubules grow by the addition of GTP-tubulin dimers to the microtubule end, where a stabilizing cap forms. Below the cap, tubulin dimers are in GDP-bound state, owing to GTPase activity of alpha-tubulin. In Volvox carteri (Green alga), this protein is Tubulin alpha-1/alpha-2 chain (TUBA1).